Reading from the N-terminus, the 257-residue chain is Imidazole glycerol phosphate synthase subunit HisF (257 aa).

Residues D11 and D130 contribute to the active site.

It belongs to the HisA/HisF family. As to quaternary structure, heterodimer of HisH and HisF.

The protein localises to the cytoplasm. It catalyses the reaction 5-[(5-phospho-1-deoxy-D-ribulos-1-ylimino)methylamino]-1-(5-phospho-beta-D-ribosyl)imidazole-4-carboxamide + L-glutamine = D-erythro-1-(imidazol-4-yl)glycerol 3-phosphate + 5-amino-1-(5-phospho-beta-D-ribosyl)imidazole-4-carboxamide + L-glutamate + H(+). Its pathway is amino-acid biosynthesis; L-histidine biosynthesis; L-histidine from 5-phospho-alpha-D-ribose 1-diphosphate: step 5/9. In terms of biological role, IGPS catalyzes the conversion of PRFAR and glutamine to IGP, AICAR and glutamate. The HisF subunit catalyzes the cyclization activity that produces IGP and AICAR from PRFAR using the ammonia provided by the HisH subunit. The polypeptide is Imidazole glycerol phosphate synthase subunit HisF (Tolumonas auensis (strain DSM 9187 / NBRC 110442 / TA 4)).